The primary structure comprises 128 residues: Flagellar basal body rod protein FlgB (128 aa).

This sequence belongs to the flagella basal body rod proteins family. As to quaternary structure, the basal body constitutes a major portion of the flagellar organelle and consists of a number of rings mounted on a central rod. In Gram-negative bacteria, at least four rings, L, P, S and M are present, whereas Gram-positive bacteria lack the L and P rings. The rod consists of about 26 subunits of FlgG in the distal portion, and FlgB, FlgC and FlgF build up the proximal portion of the rod with about 6 subunits each. Rod assembly occurs by export via the flagellum-specific pathway of its constituent proteins and by their incorporation into the rod structure in the probable order of FlgB, FlgC, FlgF and FlgG. Another protein, FliE, also assembles onto the stable rod structure.

It is found in the bacterial flagellum basal body. Structural component of flagellum, the bacterial motility apparatus. Part of the rod structure of flagellar basal body. This chain is Flagellar basal body rod protein FlgB, found in Cereibacter sphaeroides (Rhodobacter sphaeroides).